Consider the following 115-residue polypeptide: Protein Wnt-2 (115 aa).

A lipid anchor (O-palmitoleoyl serine; by PORCN) is attached at serine 1. Residues cysteine 81 and cysteine 96 are joined by a disulfide bond. Asparagine 82 carries N-linked (GlcNAc...) asparagine glycosylation.

Belongs to the Wnt family. In terms of processing, palmitoleoylation is required for efficient binding to frizzled receptors. Depalmitoleoylation leads to Wnt signaling pathway inhibition.

It is found in the secreted. The protein resides in the extracellular space. The protein localises to the extracellular matrix. In terms of biological role, ligand for members of the frizzled family of seven transmembrane receptors. Probable developmental protein. May be a signaling molecule which affects the development of discrete regions of tissues. Is likely to signal over only few cell diameters. This chain is Protein Wnt-2 (WNT-2), found in Strongylocentrotus purpuratus (Purple sea urchin).